Consider the following 323-residue polypeptide: Viral cathepsin (323 aa).

The first 18 residues, 1–18 (MSKFLLYWFVYGVVCSAA), serve as a signal peptide directing secretion. The propeptide at 19 to 112 (YDILKAPNYF…VVLDRPPGKG (94 aa)) is activation peptide. Intrachain disulfides connect Cys133/Cys174, Cys167/Cys207, and Cys262/Cys310. Residue Cys136 is part of the active site. Asn158 carries N-linked (GlcNAc...) asparagine; by host glycosylation. Catalysis depends on residues His269 and Asn289.

Belongs to the peptidase C1 family. Post-translationally, synthesized as an inactive proenzyme and activated by proteolytic removal of the inhibitory propeptide.

The catalysed reaction is Endopeptidase of broad specificity, hydrolyzing substrates of both cathepsin L and cathepsin B.. In terms of biological role, cysteine protease that plays an essential role in host liquefaction to facilitate horizontal transmission of the virus. May participate in the degradation of foreign protein expressed by the baculovirus system. This Lepidoptera (butterflies and moths) protein is Viral cathepsin (VCATH).